The primary structure comprises 402 residues: MISGEQAKPLLITNVKPVAFGVEHSDATTDILVGKDGSISAIGKSLNAPADVERVDGKGAWISPGWVDLHVHIWHGGTDISIRPSECGAERGVTTLVDAGSAGEANFHGFREYIIEPSKERIKAFLNLGSIGLVACNRVPELRDIKDIDLDRILECYAANSEHIVGIKVRASHVITGSWGVTPVKLGKKIAKILKVPMMVHVGEPPALYDEVLEILGPGDVVTHCFNGKSGSSIMEDEDLFNLAERCSGEGIRLDIGHGGASFSFKVAEAAIERGLLPFSISTDLHGHSMNFPVWDLATTMSKLLSVNMPFENVIEAVTHNPASVIKLSMENRLSVGQRADFTIFDLVDADLEATDSNGDVSRLNRLFEPRYAVIGAEAITASRYIPRARKLVRHSHGYSWR.

The Zn(2+) site is built by H70, H72, K168, H201, H224, and D284. N6-carboxylysine is present on K168.

The protein belongs to the metallo-dependent hydrolases superfamily. Atu3266/EF_0837 deacetylase family. Requires Zn(2+) as cofactor.

Esterase that catalyzes the deacetylation of acetyl-(R)-mandelate (in vitro). Can also hydrolyze acetyl glycolate, but with lower efficiency. Has very low N-acetyl-D-amino acid deacetylase activity with N-acetyl-D-serine and N-acetyl-D-threonine (in vitro). Theoretical substrate docking studies suggest that other N-acetylated amino acids may optimally occupy the active site and may in fact be the physiological substrates. In Brucella anthropi (strain ATCC 49188 / DSM 6882 / CCUG 24695 / JCM 21032 / LMG 3331 / NBRC 15819 / NCTC 12168 / Alc 37) (Ochrobactrum anthropi), this protein is Deacetylase Oant_2987.